The following is a 210-amino-acid chain: ATP-dependent Clp protease proteolytic subunit (210 aa).

S107 functions as the Nucleophile in the catalytic mechanism. The active site involves H132.

It belongs to the peptidase S14 family. As to quaternary structure, fourteen ClpP subunits assemble into 2 heptameric rings which stack back to back to give a disk-like structure with a central cavity, resembling the structure of eukaryotic proteasomes.

It localises to the cytoplasm. The enzyme catalyses Hydrolysis of proteins to small peptides in the presence of ATP and magnesium. alpha-casein is the usual test substrate. In the absence of ATP, only oligopeptides shorter than five residues are hydrolyzed (such as succinyl-Leu-Tyr-|-NHMec, and Leu-Tyr-Leu-|-Tyr-Trp, in which cleavage of the -Tyr-|-Leu- and -Tyr-|-Trp bonds also occurs).. Functionally, cleaves peptides in various proteins in a process that requires ATP hydrolysis. Has a chymotrypsin-like activity. Plays a major role in the degradation of misfolded proteins. This Azorhizobium caulinodans (strain ATCC 43989 / DSM 5975 / JCM 20966 / LMG 6465 / NBRC 14845 / NCIMB 13405 / ORS 571) protein is ATP-dependent Clp protease proteolytic subunit.